Consider the following 597-residue polypeptide: Intrastrand cross-link recognition protein (597 aa).

Positions 1–28 (MNTGISPKQDDASNSNLLNIGQDHSLQY) are enriched in polar residues. 4 disordered regions span residues 1–134 (MNTG…NVNA), 174–212 (QTNP…LAAS), 259–291 (SAGN…QQQM), and 327–364 (HLQQ…PKRP). Over residues 32-42 (EHNDSQYRDAS) the composition is skewed to basic and acidic residues. Low complexity-rich tracts occupy residues 52-134 (QFQA…NVNA), 178-212 (SVTG…LAAS), 260-271 (AGNAAGNANTAT), 281-291 (QPQLTHHQQQM), and 327-337 (HLQQQQQQQQH). A compositionally biased stretch (basic residues) spans 351-361 (ERRKQLKKQGP). 2 consecutive DNA-binding regions (HMG box) follow at residues 361–429 (PKRP…DAYE) and 434–502 (PKRP…PDEN). Ser-532 carries the phosphoserine modification. Composition is skewed to low complexity over residues 543–556 (SVTG…NPNT) and 564–580 (LQQQ…QQQQ). Positions 543 to 597 (SVTGSNSNSTNPNTPVSPPISLQQQPLQQQQQQQQQQQHMLLADPTTNGSIIKNE) are disordered. Residues 587-597 (PTTNGSIIKNE) are compositionally biased toward polar residues.

Its subcellular location is the nucleus. Functionally, binds to platinated DNA and confers sensitivity to the anticancer drug cisplatin. Activate the expression of the COX5B gene. The chain is Intrastrand cross-link recognition protein (IXR1) from Saccharomyces cerevisiae (strain ATCC 204508 / S288c) (Baker's yeast).